The chain runs to 343 residues: Biotin synthase (343 aa).

The region spanning 64-291 (NTVQLSTLLS…RAMVRLSAGR (228 aa)) is the Radical SAM core domain. 3 residues coordinate [4Fe-4S] cluster: C79, C83, and C86. [2Fe-2S] cluster-binding residues include C123, C154, C214, and R286.

Belongs to the radical SAM superfamily. Biotin synthase family. Homodimer. Requires [4Fe-4S] cluster as cofactor. The cofactor is [2Fe-2S] cluster.

It carries out the reaction (4R,5S)-dethiobiotin + (sulfur carrier)-SH + 2 reduced [2Fe-2S]-[ferredoxin] + 2 S-adenosyl-L-methionine = (sulfur carrier)-H + biotin + 2 5'-deoxyadenosine + 2 L-methionine + 2 oxidized [2Fe-2S]-[ferredoxin]. It participates in cofactor biosynthesis; biotin biosynthesis; biotin from 7,8-diaminononanoate: step 2/2. In terms of biological role, catalyzes the conversion of dethiobiotin (DTB) to biotin by the insertion of a sulfur atom into dethiobiotin via a radical-based mechanism. This is Biotin synthase from Cupriavidus necator (strain ATCC 17699 / DSM 428 / KCTC 22496 / NCIMB 10442 / H16 / Stanier 337) (Ralstonia eutropha).